Here is a 522-residue protein sequence, read N- to C-terminus: Putative zinc finger protein 286B (522 aa).

A disordered region spans residues 1–30 (METDLAEMPEKGVLSSQDSPHFQEKSTEEG). 10 consecutive C2H2-type zinc fingers follow at residues 244 to 266 (HKCN…QRVH), 272 to 294 (YTCN…QRTH), 299 to 321 (FECR…QRIH), 327 to 349 (YECN…QLIH), 355 to 377 (YECN…QRTH), 383 to 405 (YKCQ…QRVH), 411 to 433 (YECS…QRIH), 439 to 461 (YECS…QRIH), 467 to 489 (YKCS…QRTH), and 495 to 517 (FRCN…QRVH).

Belongs to the krueppel C2H2-type zinc-finger protein family.

The protein resides in the nucleus. Its function is as follows. May be involved in transcriptional regulation. This chain is Putative zinc finger protein 286B (ZNF286B), found in Homo sapiens (Human).